A 281-amino-acid chain; its full sequence is tRNA uridine(34) hydroxylase (281 aa).

Positions 125-222 (AREDVKTIDT…YFLKTKNKDG (98 aa)) constitute a Rhodanese domain. C182 serves as the catalytic Cysteine persulfide intermediate.

It belongs to the TrhO family.

It carries out the reaction uridine(34) in tRNA + AH2 + O2 = 5-hydroxyuridine(34) in tRNA + A + H2O. In terms of biological role, catalyzes oxygen-dependent 5-hydroxyuridine (ho5U) modification at position 34 in tRNAs. This chain is tRNA uridine(34) hydroxylase, found in Neorickettsia sennetsu (strain ATCC VR-367 / Miyayama) (Ehrlichia sennetsu).